A 551-amino-acid chain; its full sequence is Probable NADH-ubiquinone oxidoreductase C947.15c, mitochondrial (551 aa).

Residues 1–35 (MSVSKARLQSVVRLSRTVPYSKTMVRSFHVSCAVK) constitute a mitochondrion transit peptide. 92–122 (NIVVLGSGWGAVAAIKNLDPSLYNITLVSPR) contributes to the FAD binding site. An NAD(+)-binding site is contributed by 255-291 (LHITVVGGGPTGMEFAAEMQDFIDNDVKDMFPELQKD).

The protein belongs to the NADH dehydrogenase family.

The protein localises to the mitochondrion. It catalyses the reaction a quinone + NADH + H(+) = a quinol + NAD(+). The catalysed reaction is a ubiquinone + NADH + H(+) = a ubiquinol + NAD(+). In terms of biological role, catalyzes the oxidation of NADH. In Schizosaccharomyces pombe (strain 972 / ATCC 24843) (Fission yeast), this protein is Probable NADH-ubiquinone oxidoreductase C947.15c, mitochondrial.